The sequence spans 274 residues: MDEIKTLLVDFFPQAKHFGIILIKAVIVFCIGFYFSFFLRNKTMKLLSKKDEILANFVAQVTFILILIITTIIALSTLGVQTTSIITVLGTVGIAVALALKDYLSSIAGGIILIILHPFKKGDIIEISGLEGKVEALNFFNTSLRLHDGRLAVLPNRSVANSNIINSNNTACRRIEWVCGVGYGSDIELVHKTIKDVIDTMEKIDKNMPTFIGITDFGSSSLNFTIRVWAKIEDGIFNVRSELIERIKNALDANHIEIPFNKLDIAIKNQDSSK.

The Periplasmic portion of the chain corresponds to 1-21; the sequence is MDEIKTLLVDFFPQAKHFGII. Residues 22-44 form a helical membrane-spanning segment; it reads LIKAVIVFCIGFYFSFFLRNKTM. The Cytoplasmic portion of the chain corresponds to 45–56; sequence KLLSKKDEILAN. Residues 57–77 form a helical membrane-spanning segment; it reads FVAQVTFILILIITTIIALST. At 78–79 the chain is on the periplasmic side; it reads LG. Residues 80-100 form a helical membrane-spanning segment; that stretch reads VQTTSIITVLGTVGIAVALAL. The Cytoplasmic portion of the chain corresponds to 101 to 274; that stretch reads KDYLSSIAGG…IAIKNQDSSK (174 aa).

Belongs to the MscS (TC 1.A.23) family. As to quaternary structure, homoheptamer.

The protein localises to the cell inner membrane. Its function is as follows. Mechanosensitive channel that participates in the regulation of osmotic pressure changes within the cell, opening in response to stretch forces in the membrane lipid bilayer, without the need for other proteins. Contributes to normal resistance to hypoosmotic shock. Forms an ion channel of 1.0 nanosiemens conductance with a slight preference for anions. The protein is Small-conductance mechanosensitive channel (mscS) of Helicobacter pylori (strain UM084).